A 357-amino-acid chain; its full sequence is Sulfate/thiosulfate import ATP-binding protein CysA (357 aa).

The region spanning 3–237 is the ABC transporter domain; it reads IQIQGVSKQY…PASPFVYDFL (235 aa). Residue 35 to 42 coordinates ATP; it reads GPSGSGKT.

This sequence belongs to the ABC transporter superfamily. Sulfate/tungstate importer (TC 3.A.1.6) family. In terms of assembly, the complex is composed of two ATP-binding proteins (CysA), two transmembrane proteins (CysT and CysW) and a solute-binding protein (CysP).

The protein localises to the cell membrane. It carries out the reaction sulfate(out) + ATP + H2O = sulfate(in) + ADP + phosphate + H(+). The catalysed reaction is thiosulfate(out) + ATP + H2O = thiosulfate(in) + ADP + phosphate + H(+). In terms of biological role, part of the ABC transporter complex CysAWTP involved in sulfate/thiosulfate import. Responsible for energy coupling to the transport system. The protein is Sulfate/thiosulfate import ATP-binding protein CysA of Bacillus cereus (strain ATCC 10987 / NRS 248).